We begin with the raw amino-acid sequence, 595 residues long: Zinc finger protein 467 (595 aa).

Residues 1 to 67 (MRETLEALSS…EEGAHTEQAE (67 aa)) form a disordered region. K97 is covalently cross-linked (Glycyl lysine isopeptide (Lys-Gly) (interchain with G-Cter in SUMO2)). 6 C2H2-type zinc fingers span residues 160–182 (YGCG…QRLH), 188–210 (CACP…QRSH), 216–238 (FPCS…LRTH), 244–266 (YPCA…QKTH), 272–294 (FPCT…QRIH), and 300–322 (YQCA…QRVH). The interval 313–350 (QHLVRHQRVHQTAGPARPSPDSSASPHSTAPSPTPSFP) is disordered. The segment covering 325 to 343 (AGPARPSPDSSASPHSTAP) has biased composition (low complexity). 6 consecutive C2H2-type zinc fingers follow at residues 355–377 (FACS…QCLH), 431–453 (FFCP…PRVH), 459–481 (FACT…SRAH), 487–509 (FACA…QAVH), 515–537 (HACA…QAIH), and 543–565 (FSCP…QLIH). K368 is covalently cross-linked (Glycyl lysine isopeptide (Lys-Gly) (interchain with G-Cter in SUMO2)).

The protein belongs to the krueppel C2H2-type zinc-finger protein family. As to quaternary structure, interacts with STAT3. Enhances STAT3 activity by keeping it in the nucleus.

The protein resides in the nucleus. Transcription factor that promotes adipocyte differentiation and suppresses osteoblast differentiation in the bone marrow. Enhances the osteoclast-supporting ability of stromal cells. Binds with STAT3 the consensus sequence 5'-CTTCTGGGAAGA-3' of the acute phase response element (APRE). Transactivates several promoters including FOS, OSM and PPARG. Recruits a histone deacetylase complex. This is Zinc finger protein 467 (ZNF467) from Homo sapiens (Human).